We begin with the raw amino-acid sequence, 149 residues long: Large ribosomal subunit protein bL9 (149 aa).

Belongs to the bacterial ribosomal protein bL9 family.

Functionally, binds to the 23S rRNA. The chain is Large ribosomal subunit protein bL9 from Salinibacter ruber (strain DSM 13855 / M31).